We begin with the raw amino-acid sequence, 505 residues long: 2-methylcitrate dehydratase (505 aa).

This sequence belongs to the PrpD family. Monomer.

It catalyses the reaction (2S,3S)-2-methylcitrate = 2-methyl-cis-aconitate + H2O. It carries out the reaction citrate = D-threo-isocitrate. Its pathway is organic acid metabolism; propanoate degradation. It functions in the pathway carbohydrate metabolism; tricarboxylic acid cycle; isocitrate from oxaloacetate: step 1/2. Functionally, involved in the catabolism of short chain fatty acids (SCFA) via the tricarboxylic acid (TCA)(acetyl degradation route) and via the 2-methylcitrate cycle I (propionate degradation route). Catalyzes the dehydration of 2-methylcitrate (2-MC) to yield the cis isomer of 2-methyl-aconitate. Could also catalyze the dehydration of citrate and the hydration of cis-aconitate. This Mycobacterium tuberculosis (strain ATCC 35801 / TMC 107 / Erdman) protein is 2-methylcitrate dehydratase.